A 141-amino-acid polypeptide reads, in one-letter code: Large ribosomal subunit protein bL17 (141 aa).

This sequence belongs to the bacterial ribosomal protein bL17 family. In terms of assembly, part of the 50S ribosomal subunit. Contacts protein L32.

In Maridesulfovibrio salexigens (strain ATCC 14822 / DSM 2638 / NCIMB 8403 / VKM B-1763) (Desulfovibrio salexigens), this protein is Large ribosomal subunit protein bL17.